We begin with the raw amino-acid sequence, 393 residues long: Protein TsgA (393 aa).

The next 12 membrane-spanning stretches (helical) occupy residues 11 to 31, 51 to 71, 78 to 98, 101 to 121, 134 to 154, 162 to 182, 206 to 226, 245 to 265, 273 to 293, 297 to 317, 332 to 352, and 361 to 381; these read WISFLSYALTGALVIVTGMVM, FLNAGILISIFLNAWLMEIVP, FGFLLMVLAVAGLMFSHSLAL, AAMFILGVVSGITMSIGTFLV, LLFTDSFFSMAGMIFPMIAAF, WYWVYACIGLVYVAIFILTFG, IGVLFLSVAALCYILGQLGFI, TLVSNFWMSYMVGMWAFSFIL, ILTVLAGLAAILMYVFNTGTP, AWSILALGFFSSAIYTTIITL, FVLTCGTIGTMLTFVVTGPIV, and LLTANGLYAVVFVMCFLLGFV.

This sequence belongs to the major facilitator superfamily. TsgA family.

The protein localises to the cell inner membrane. The sequence is that of Protein TsgA from Escherichia coli O6:K15:H31 (strain 536 / UPEC).